Here is a 94-residue protein sequence, read N- to C-terminus: Cell division topological specificity factor (94 aa).

Belongs to the MinE family.

Its function is as follows. Prevents the cell division inhibition by proteins MinC and MinD at internal division sites while permitting inhibition at polar sites. This ensures cell division at the proper site by restricting the formation of a division septum at the midpoint of the long axis of the cell. This chain is Cell division topological specificity factor, found in Hamiltonella defensa subsp. Acyrthosiphon pisum (strain 5AT).